Consider the following 190-residue polypeptide: Small ribosomal subunit protein eS7 (190 aa).

It belongs to the eukaryotic ribosomal protein eS7 family.

The protein is Small ribosomal subunit protein eS7 (RPS7) of Avicennia marina (Grey mangrove).